A 279-amino-acid polypeptide reads, in one-letter code: Undecaprenyl-diphosphatase (279 aa).

8 consecutive transmembrane segments (helical) span residues 1 to 21 (MVLE…LPIS), 39 to 59 (GRFF…LYFF), 96 to 116 (LLLV…VRFV), 128 to 148 (FTMG…DALF), 155 to 175 (IFQI…FAII), 201 to 221 (FSFL…LVAG), 231 to 251 (YSLI…SALL), and 259 to 279 (FVLF…VSFF).

It belongs to the UppP family.

It localises to the cell membrane. It carries out the reaction di-trans,octa-cis-undecaprenyl diphosphate + H2O = di-trans,octa-cis-undecaprenyl phosphate + phosphate + H(+). Its function is as follows. Catalyzes the dephosphorylation of undecaprenyl diphosphate (UPP). Confers resistance to bacitracin. In Tropheryma whipplei (strain Twist) (Whipple's bacillus), this protein is Undecaprenyl-diphosphatase.